Reading from the N-terminus, the 287-residue chain is Cell division protein ZipA (287 aa).

A topological domain (periplasmic) is located at residue Met-1. Residues 2 to 22 (EIGLREWLIVIGIIVIAGILF) traverse the membrane as a helical segment. At 23-287 (DGWRRMRGSK…ERRALTQRRG (265 aa)) the chain is on the cytoplasmic side. Residues 48 to 140 (DEEETTSAEV…PTQRITEDKD (93 aa)) form a disordered region. 3 stretches are compositionally biased toward basic and acidic residues: residues 64 to 77 (LDTH…EHDL), 85 to 104 (REGK…KDEP), and 121 to 140 (GRDD…EDKD).

Belongs to the ZipA family. Interacts with FtsZ via their C-terminal domains.

Its subcellular location is the cell inner membrane. Functionally, essential cell division protein that stabilizes the FtsZ protofilaments by cross-linking them and that serves as a cytoplasmic membrane anchor for the Z ring. Also required for the recruitment to the septal ring of downstream cell division proteins. The polypeptide is Cell division protein ZipA (Pseudomonas syringae pv. syringae (strain B728a)).